A 232-amino-acid polypeptide reads, in one-letter code: Ribose-5-phosphate isomerase A (232 aa).

Substrate contacts are provided by residues 28 to 31 (TGST), 83 to 86 (DGAD), and 96 to 99 (KGGG). The active-site Proton acceptor is Glu-105. Residue Lys-123 participates in substrate binding.

The protein belongs to the ribose 5-phosphate isomerase family. In terms of assembly, homodimer.

The catalysed reaction is aldehydo-D-ribose 5-phosphate = D-ribulose 5-phosphate. It participates in carbohydrate degradation; pentose phosphate pathway; D-ribose 5-phosphate from D-ribulose 5-phosphate (non-oxidative stage): step 1/1. Functionally, catalyzes the reversible conversion of ribose-5-phosphate to ribulose 5-phosphate. In Nitrobacter hamburgensis (strain DSM 10229 / NCIMB 13809 / X14), this protein is Ribose-5-phosphate isomerase A.